The sequence spans 404 residues: Cysteine desulfurase IscS (404 aa).

Pyridoxal 5'-phosphate-binding positions include 75-76, asparagine 155, glutamine 183, and 203-205; these read AT and SAH. Residue lysine 206 is modified to N6-(pyridoxal phosphate)lysine. Threonine 243 provides a ligand contact to pyridoxal 5'-phosphate. Catalysis depends on cysteine 328, which acts as the Cysteine persulfide intermediate. Residue cysteine 328 participates in [2Fe-2S] cluster binding.

The protein belongs to the class-V pyridoxal-phosphate-dependent aminotransferase family. NifS/IscS subfamily. Homodimer. Forms a heterotetramer with IscU, interacts with other sulfur acceptors. The cofactor is pyridoxal 5'-phosphate.

It localises to the cytoplasm. It catalyses the reaction (sulfur carrier)-H + L-cysteine = (sulfur carrier)-SH + L-alanine. The protein operates within cofactor biosynthesis; iron-sulfur cluster biosynthesis. In terms of biological role, master enzyme that delivers sulfur to a number of partners involved in Fe-S cluster assembly, tRNA modification or cofactor biosynthesis. Catalyzes the removal of elemental sulfur atoms from cysteine to produce alanine. Functions as a sulfur delivery protein for Fe-S cluster synthesis onto IscU, an Fe-S scaffold assembly protein, as well as other S acceptor proteins. In Vibrio vulnificus (strain YJ016), this protein is Cysteine desulfurase IscS.